Consider the following 447-residue polypeptide: Phosphoglucosamine mutase (447 aa).

The active-site Phosphoserine intermediate is Ser-102. Mg(2+)-binding residues include Ser-102, Asp-241, Asp-243, and Asp-245. Ser-102 carries the post-translational modification Phosphoserine.

It belongs to the phosphohexose mutase family. Requires Mg(2+) as cofactor. In terms of processing, activated by phosphorylation.

The catalysed reaction is alpha-D-glucosamine 1-phosphate = D-glucosamine 6-phosphate. Catalyzes the conversion of glucosamine-6-phosphate to glucosamine-1-phosphate. This Pseudomonas syringae pv. tomato (strain ATCC BAA-871 / DC3000) protein is Phosphoglucosamine mutase.